Reading from the N-terminus, the 216-residue chain is Uracil phosphoribosyltransferase (216 aa).

5-phospho-alpha-D-ribose 1-diphosphate contacts are provided by residues Arg-85, Arg-110, and 135–143; that span reads DPMVATGYS. Uracil contacts are provided by residues Ile-200 and 205–207; that span reads GDA. Asp-206 serves as a coordination point for 5-phospho-alpha-D-ribose 1-diphosphate.

The protein belongs to the UPRTase family. Requires Mg(2+) as cofactor.

It catalyses the reaction UMP + diphosphate = 5-phospho-alpha-D-ribose 1-diphosphate + uracil. It participates in pyrimidine metabolism; UMP biosynthesis via salvage pathway; UMP from uracil: step 1/1. With respect to regulation, allosterically activated by GTP. Functionally, catalyzes the conversion of uracil and 5-phospho-alpha-D-ribose 1-diphosphate (PRPP) to UMP and diphosphate. The protein is Uracil phosphoribosyltransferase of Burkholderia lata (strain ATCC 17760 / DSM 23089 / LMG 22485 / NCIMB 9086 / R18194 / 383).